We begin with the raw amino-acid sequence, 174 residues long: RNA pyrophosphohydrolase (174 aa).

Residues 6–149 (GFRANVGIII…KRDVYRKVMK (144 aa)) form the Nudix hydrolase domain. The short motif at 38 to 59 (GGVDDGETAEEAMYRELYEEVG) is the Nudix box element.

Belongs to the Nudix hydrolase family. RppH subfamily. A divalent metal cation serves as cofactor.

Accelerates the degradation of transcripts by removing pyrophosphate from the 5'-end of triphosphorylated RNA, leading to a more labile monophosphorylated state that can stimulate subsequent ribonuclease cleavage. In Shewanella baltica (strain OS223), this protein is RNA pyrophosphohydrolase.